The chain runs to 447 residues: MTTILKHLPAGQRIGIAFSGGLDTSAALLWMRQKGAVPYAYTANLGQPDEDDYDAIPRRAMEYGAENARLIDCRKQLVAEGIAAIQCGAFHNTTGGLTYFNTTPLGRAVTGTMLVAAMKEDGVNIWGDGSTYKGNDIERFYRYGLLTNAELQIYKPWLDTDFIDELGGRHEMSEFMIACGFDYKMSVEKAYSTDSNMLGATHEAKDLEFLNSSVKIVNPIMGVKFWDESVKIPAEEVTVRFEQGHPVALNGKTFSDDVEMMLEANRIGGRHGLGMSDQIENRIIEAKSRGIYEAPGMALLHIAYERLLTGIHNEDTIEQYHSHGRQLGKLLYQGRWFDSQALMLRDGLQRWVASQITGEVTLELRRGNDYSILNTVSDNLTYKPERLTMEKGESVFSPDDRIGQLTMRNLDITDTREKLFGYAKAGLLTASSATGLPQVENLENKGK.

ATP-binding positions include 17 to 25 (AFSGGLDTS) and Ala-43. Tyr-99 contributes to the L-citrulline binding site. ATP-binding residues include Gly-129 and Thr-131. L-aspartate-binding residues include Thr-131, Asn-135, and Asp-136. Asn-135 is an L-citrulline binding site. Asp-136 serves as a coordination point for ATP. Arg-139 and Ser-192 together coordinate L-citrulline. Asp-194 serves as a coordination point for ATP. L-citrulline contacts are provided by Thr-201, Glu-203, and Glu-280.

It belongs to the argininosuccinate synthase family. Type 2 subfamily. As to quaternary structure, homotetramer.

Its subcellular location is the cytoplasm. The catalysed reaction is L-citrulline + L-aspartate + ATP = 2-(N(omega)-L-arginino)succinate + AMP + diphosphate + H(+). The protein operates within amino-acid biosynthesis; L-arginine biosynthesis; L-arginine from L-ornithine and carbamoyl phosphate: step 2/3. This chain is Argininosuccinate synthase, found in Salmonella newport (strain SL254).